The chain runs to 243 residues: tRNA (guanine-N(1)-)-methyltransferase (243 aa).

S-adenosyl-L-methionine is bound by residues glycine 113 and 133–138; that span reads IGDFVL.

This sequence belongs to the RNA methyltransferase TrmD family. Homodimer.

It is found in the cytoplasm. It catalyses the reaction guanosine(37) in tRNA + S-adenosyl-L-methionine = N(1)-methylguanosine(37) in tRNA + S-adenosyl-L-homocysteine + H(+). Functionally, specifically methylates guanosine-37 in various tRNAs. This is tRNA (guanine-N(1)-)-methyltransferase from Bacillus velezensis (strain DSM 23117 / BGSC 10A6 / LMG 26770 / FZB42) (Bacillus amyloliquefaciens subsp. plantarum).